The following is a 208-amino-acid chain: Thymidylate kinase (208 aa).

An ATP-binding site is contributed by 10–17 (GIDGSGKT).

The protein belongs to the thymidylate kinase family.

It carries out the reaction dTMP + ATP = dTDP + ADP. Functionally, phosphorylation of dTMP to form dTDP in both de novo and salvage pathways of dTTP synthesis. This chain is Thymidylate kinase, found in Ligilactobacillus salivarius (strain UCC118) (Lactobacillus salivarius).